The primary structure comprises 644 residues: Zinc finger protein 568 (644 aa).

The 72-residue stretch at 48–119 folds into the KRAB domain; it reads VTFKDVAVDL…EEEMFGRHCP (72 aa). 15 C2H2-type zinc fingers span residues 222–244, 250–272, 278–300, 306–328, 334–356, 362–384, 390–412, 418–440, 446–468, 474–496, 502–524, 530–552, 558–580, 586–608, and 614–636; these read FKCN…ERIH, YECK…QKIH, YKCN…HRIH, YACK…ERIH, YECK…EKIH, YACN…MRSH, YKCN…MRSH, YVCS…MRNH, YECS…QRIH, YACT…EKIH, YHCN…EKIH, FKCN…VRSH, YECN…MRSH, and FECN…KRGH.

It belongs to the krueppel C2H2-type zinc-finger protein family. Interacts with TRIM28.

Its subcellular location is the nucleus. In terms of biological role, has transcriptional repression activity, partially through the recruitment of the corepressor TRIM28 but also has repression activity independently of this interaction. Essential during embryonic development, where it acts as a direct repressor of a placental-specific transcript of IGF2 in early development and regulates convergent extension movements required for axis elongation and tissue morphogenesis in all germ layers. Also important for normal morphogenesis of extraembryonic tissues including the yolk sac, extraembryonic mesoderm and placenta. May enhance proliferation or maintenance of neural stem cells. The protein is Zinc finger protein 568 (ZNF568) of Homo sapiens (Human).